We begin with the raw amino-acid sequence, 860 residues long: Leucine--tRNA ligase (860 aa).

The 'HIGH' region signature appears at 42–52; the sequence is PYPSGRLHMGH. The short motif at 619 to 623 is the 'KMSKS' region element; the sequence is KMSKS. Residue Lys622 coordinates ATP.

It belongs to the class-I aminoacyl-tRNA synthetase family.

It is found in the cytoplasm. The catalysed reaction is tRNA(Leu) + L-leucine + ATP = L-leucyl-tRNA(Leu) + AMP + diphosphate. This is Leucine--tRNA ligase from Salmonella paratyphi B (strain ATCC BAA-1250 / SPB7).